A 231-amino-acid chain; its full sequence is tRNA (guanine-N(1)-)-methyltransferase (231 aa).

S-adenosyl-L-methionine contacts are provided by residues Gly-112 and 132-137 (LGDFVL).

Belongs to the RNA methyltransferase TrmD family. As to quaternary structure, homodimer.

It is found in the cytoplasm. It catalyses the reaction guanosine(37) in tRNA + S-adenosyl-L-methionine = N(1)-methylguanosine(37) in tRNA + S-adenosyl-L-homocysteine + H(+). In terms of biological role, specifically methylates guanosine-37 in various tRNAs. This Gloeothece citriformis (strain PCC 7424) (Cyanothece sp. (strain PCC 7424)) protein is tRNA (guanine-N(1)-)-methyltransferase.